The chain runs to 660 residues: Phosphatidylinositol-3-phosphate phosphatase MTMR7 (660 aa).

Residues 126–504 (GWVLIDLSEE…FMYKFWSGMY (379 aa)) enclose the Myotubularin phosphatase domain. The a 1,2-diacyl-sn-glycero-3-phospho-(1D-myo-inositol-3-phosphate) site is built by N250, N275, and I276. Residue C338 is the Phosphocysteine intermediate of the active site. The a 1,2-diacyl-sn-glycero-3-phospho-(1D-myo-inositol-3-phosphate) site is built by S339, D340, G341, W342, D343, R344, and R384. The stretch at 514–558 (RQSVTDYLMAVKEETQQLEEELEALEERLEKIQKVQLNCTKVKSK) forms a coiled coil. The interval 554–660 (KVKSKQSEPS…DSDEAVFLTA (107 aa)) is disordered. Polar residues predominate over residues 566–596 (SGFSTSDNSIANTPQDYSGNMKSFPSRSPSQ). T578 is subject to Phosphothreonine. Residues 641–653 (APSEDSGKDRDSD) show a composition bias toward basic and acidic residues.

This sequence belongs to the protein-tyrosine phosphatase family. Non-receptor class myotubularin subfamily. In terms of assembly, heterodimer (via C-terminus) with MTMR9 (via coiled coil domain); the interaction enhances MTMR7 catalytic activity. Does not homodimerize. Interacts with RAB1B (in GDP-bound form).

The protein resides in the cytoplasm. The protein localises to the endomembrane system. The enzyme catalyses a 1,2-diacyl-sn-glycero-3-phospho-(1D-myo-inositol-3-phosphate) + H2O = a 1,2-diacyl-sn-glycero-3-phospho-(1D-myo-inositol) + phosphate. The catalysed reaction is 1D-myo-inositol 1,3-bisphosphate + H2O = 1D-myo-inositol 1-phosphate + phosphate. With respect to regulation, interaction with MTMR9 increases phosphatase activity. In terms of biological role, lipid phosphatase that specifically dephosphorylates the D-3 position of phosphatidylinositol 3-phosphate (PtdIns(3)P) and inositol 1,3-bisphosphate (Ins(1,3)P2). The chain is Phosphatidylinositol-3-phosphate phosphatase MTMR7 from Pongo abelii (Sumatran orangutan).